The sequence spans 141 residues: Lutropin subunit beta (141 aa).

Positions 1-20 (MEMLQGLLLWLLLNVGGVWA) are cleaved as a signal peptide. 6 disulfide bridges follow: Cys29/Cys77, Cys43/Cys92, Cys46/Cys130, Cys54/Cys108, Cys58/Cys110, and Cys113/Cys120. Asn33 carries an N-linked (GlcNAc...) asparagine glycan.

It belongs to the glycoprotein hormones subunit beta family. Heterodimer of a common alpha chain and a unique beta chain which confers biological specificity to thyrotropin, lutropin, follitropin and gonadotropin.

It is found in the secreted. Functionally, promotes spermatogenesis and ovulation by stimulating the testes and ovaries to synthesize steroids. The chain is Lutropin subunit beta (LHB) from Ailurus fulgens (Himalayan red panda).